Reading from the N-terminus, the 212-residue chain is Deoxyribose-phosphate aldolase (212 aa).

Aspartate 90 serves as the catalytic Proton donor/acceptor. Lysine 151 serves as the catalytic Schiff-base intermediate with acetaldehyde. Lysine 176 (proton donor/acceptor) is an active-site residue.

It belongs to the DeoC/FbaB aldolase family. DeoC type 1 subfamily.

Its subcellular location is the cytoplasm. The catalysed reaction is 2-deoxy-D-ribose 5-phosphate = D-glyceraldehyde 3-phosphate + acetaldehyde. Its pathway is carbohydrate degradation; 2-deoxy-D-ribose 1-phosphate degradation; D-glyceraldehyde 3-phosphate and acetaldehyde from 2-deoxy-alpha-D-ribose 1-phosphate: step 2/2. Catalyzes a reversible aldol reaction between acetaldehyde and D-glyceraldehyde 3-phosphate to generate 2-deoxy-D-ribose 5-phosphate. This is Deoxyribose-phosphate aldolase from Halobacterium salinarum (strain ATCC 29341 / DSM 671 / R1).